The chain runs to 868 residues: DNA mismatch repair protein MutS (868 aa).

Position 620 to 627 (620 to 627 (GPNMSGKS)) interacts with ATP.

Belongs to the DNA mismatch repair MutS family.

Functionally, this protein is involved in the repair of mismatches in DNA. It is possible that it carries out the mismatch recognition step. This protein has a weak ATPase activity. This is DNA mismatch repair protein MutS from Flavobacterium johnsoniae (strain ATCC 17061 / DSM 2064 / JCM 8514 / BCRC 14874 / CCUG 350202 / NBRC 14942 / NCIMB 11054 / UW101) (Cytophaga johnsonae).